The following is a 342-amino-acid chain: Holliday junction branch migration complex subunit RuvB (342 aa).

Residues 1–185 form a large ATPase domain (RuvB-L) region; it reads MTVKPLRDVT…FPIQERLEYY (185 aa). ATP contacts are provided by residues Leu24, Arg25, Gly66, Lys69, Thr70, Ser71, 132–134, Arg175, Tyr185, and Arg222; that span reads EDY. Residue Thr70 participates in Mg(2+) binding. The tract at residues 186–256 is small ATPAse domain (RuvB-S); it reads GPAELKEIAV…VVDRTLRRLE (71 aa). Positions 259-342 are head domain (RuvB-H); sequence ARGLDAMDRR…RPGGKQGSLV (84 aa). DNA-binding residues include Arg314 and Arg319.

The protein belongs to the RuvB family. In terms of assembly, homohexamer. Forms an RuvA(8)-RuvB(12)-Holliday junction (HJ) complex. HJ DNA is sandwiched between 2 RuvA tetramers; dsDNA enters through RuvA and exits via RuvB. An RuvB hexamer assembles on each DNA strand where it exits the tetramer. Each RuvB hexamer is contacted by two RuvA subunits (via domain III) on 2 adjacent RuvB subunits; this complex drives branch migration. In the full resolvosome a probable DNA-RuvA(4)-RuvB(12)-RuvC(2) complex forms which resolves the HJ.

It localises to the cytoplasm. It carries out the reaction ATP + H2O = ADP + phosphate + H(+). Functionally, the RuvA-RuvB-RuvC complex processes Holliday junction (HJ) DNA during genetic recombination and DNA repair, while the RuvA-RuvB complex plays an important role in the rescue of blocked DNA replication forks via replication fork reversal (RFR). RuvA specifically binds to HJ cruciform DNA, conferring on it an open structure. The RuvB hexamer acts as an ATP-dependent pump, pulling dsDNA into and through the RuvAB complex. RuvB forms 2 homohexamers on either side of HJ DNA bound by 1 or 2 RuvA tetramers; 4 subunits per hexamer contact DNA at a time. Coordinated motions by a converter formed by DNA-disengaged RuvB subunits stimulates ATP hydrolysis and nucleotide exchange. Immobilization of the converter enables RuvB to convert the ATP-contained energy into a lever motion, pulling 2 nucleotides of DNA out of the RuvA tetramer per ATP hydrolyzed, thus driving DNA branch migration. The RuvB motors rotate together with the DNA substrate, which together with the progressing nucleotide cycle form the mechanistic basis for DNA recombination by continuous HJ branch migration. Branch migration allows RuvC to scan DNA until it finds its consensus sequence, where it cleaves and resolves cruciform DNA. This chain is Holliday junction branch migration complex subunit RuvB, found in Anaeromyxobacter sp. (strain K).